Consider the following 349-residue polypeptide: 4-hydroxythreonine-4-phosphate dehydrogenase (349 aa).

Thr-135 lines the substrate pocket. A divalent metal cation-binding residues include His-170, His-215, and His-276. Positions 284, 293, and 302 each coordinate substrate.

The protein belongs to the PdxA family. As to quaternary structure, homodimer. It depends on a divalent metal cation as a cofactor.

The protein localises to the cytoplasm. It carries out the reaction 4-(phosphooxy)-L-threonine + NAD(+) = 3-amino-2-oxopropyl phosphate + CO2 + NADH. It participates in cofactor biosynthesis; pyridoxine 5'-phosphate biosynthesis; pyridoxine 5'-phosphate from D-erythrose 4-phosphate: step 4/5. Its function is as follows. Catalyzes the NAD(P)-dependent oxidation of 4-(phosphooxy)-L-threonine (HTP) into 2-amino-3-oxo-4-(phosphooxy)butyric acid which spontaneously decarboxylates to form 3-amino-2-oxopropyl phosphate (AHAP). The protein is 4-hydroxythreonine-4-phosphate dehydrogenase of Synechococcus sp. (strain JA-3-3Ab) (Cyanobacteria bacterium Yellowstone A-Prime).